Here is a 1247-residue protein sequence, read N- to C-terminus: F-box/WD repeat-containing protein A (1247 aa).

The START domain maps to 1-214; the sequence is MQYVNGNDIS…PATVSGRLAK (214 aa). 2 disordered regions span residues 484–514 and 552–576; these read GNKD…DNII and QQPQ…KEIK. Residues 552-566 are compositionally biased toward low complexity; the sequence is QQPQQQQQQPQEQQQ. The F-box domain maps to 631 to 677; it reads NSGFDNLPEEVVQIIFSNLSAINIVNLSLVCKRFKMATDSPILWKNL. Disordered regions lie at residues 697-744 and 833-856; these read SNLS…QQQQ and GQES…KRDN. 2 stretches are compositionally biased toward low complexity: residues 707–719 and 726–744; these read NSNS…GSSS and QQQN…QQQQ. Residues 833–846 are compositionally biased toward polar residues; the sequence is GQESPINKNSSDNP. WD repeat units follow at residues 895–934, 945–984, 988–1025, 1029–1073, 1076–1114, 1119–1158, and 1218–1247; these read GHNR…GDYE, DHTQ…IEVI, RPTN…LLWN, AHTK…CINT, GHSY…TFIS, KHTG…LSNI, and NHES…RWDF.

In terms of assembly, component of an SCF complex including at least culA. Formation of this complex appears to require activity of the MAP kinase erk2. Interacts with regA.

Functionally, substrate recognition component of a SCF (SKP1-CUL1-F-box protein) E3 ubiquitin-protein ligase complex which mediates the ubiquitination and subsequent proteasomal degradation of target proteins. May target the cAMP phosphodiesterase regA for degradation leading to an increase in cAMP and PKA activity. Promotes development of prestalk cells as opposed to prespores within the developing fruiting body. Required for culmination and fruiting body development. The protein is F-box/WD repeat-containing protein A (fbxA) of Dictyostelium discoideum (Social amoeba).